The chain runs to 858 residues: Neural cell adhesion molecule 1 (858 aa).

The N-terminal stretch at 1 to 19 (MLRTKDLIWTLFFLGTAVS) is a signal peptide. Ig-like C2-type domains are found at residues 20 to 111 (LQVD…ATVN), 116 to 205 (QKLM…KDIQ), 212 to 302 (PTVQ…ASIH), 309 to 414 (PKIT…LEVQ), and 417 to 502 (PKLQ…ESLE). The Extracellular segment spans residues 20 to 721 (LQVDIVPSQG…NGSPTAGLST (702 aa)). 2 disulfide bridges follow: Cys41/Cys96 and Cys139/Cys189. Heparin is bound by residues 152–156 (KHKGR) and 161–165 (KKDVR). An N-linked (GlcNAc...) asparagine glycan is attached at Asn222. A disulfide bond links Cys235 and Cys288. N-linked (GlcNAc...) asparagine glycans are attached at residues Asn316, Asn348, Asn434, Asn460, and Asn489. Cys330 and Cys396 are oxidised to a cystine. The cysteines at positions 437 and 490 are disulfide-linked. 2 consecutive Fibronectin type-III domains span residues 510–609 (TPSS…TQPV) and 611–706 (EPSA…SAQP). Residues 722 to 739 (GAIVGILIVIFVLLLVVM) form a helical membrane-spanning segment. Topologically, residues 740 to 858 (DITCYFLNKC…TQTKENESKA (119 aa)) are cytoplasmic. The interval 765–858 (PGAKGKDMEE…TQTKENESKA (94 aa)) is disordered. Composition is skewed to basic and acidic residues over residues 768–809 (KGKD…HTEP) and 817–834 (EPEK…ESEA). 2 positions are modified to phosphoserine: Ser780 and Ser784.

Interacts with MDK. Found in a complex with SLC39A6, SLC39A10 and with NCAM1; this complex controls NCAM1 phosphorylation and integration into focal adhesion complexes during epithelial-tomesenchymal transition. Interacts with synaptic plasticity regulator PANTS. Post-translationally, polysialylated by ST8SIA2 and ST8SIA4. Polysialylation modulates cell interactions by confering both attractive and repulsive properties that are highly regulated by ST8SIA2 and ST8SIA4. Polysialylation is formed on a-2,3-linked sialic acid of core glycans.

Its subcellular location is the cell membrane. This protein is a cell adhesion molecule involved in neuron-neuron adhesion, neurite fasciculation, outgrowth of neurites, etc. This is Neural cell adhesion molecule 1 from Rattus norvegicus (Rat).